A 465-amino-acid chain; its full sequence is 23S rRNA (uracil(1939)-C(5))-methyltransferase RlmD (465 aa).

A disordered region spans residues 1 to 22 (MSEAVPTSARKSRNAPVAPGPA). The region spanning 16–80 (PVAPGPAPVL…PSYEQATVVD (65 aa)) is the TRAM domain. The [4Fe-4S] cluster site is built by Cys-93, Cys-99, Cys-102, and Cys-181. Residues Gln-289, Phe-318, Asn-323, Glu-339, Asn-367, and Asp-388 each contribute to the S-adenosyl-L-methionine site. Residue Cys-421 is the Nucleophile of the active site.

This sequence belongs to the class I-like SAM-binding methyltransferase superfamily. RNA M5U methyltransferase family. RlmD subfamily.

It catalyses the reaction uridine(1939) in 23S rRNA + S-adenosyl-L-methionine = 5-methyluridine(1939) in 23S rRNA + S-adenosyl-L-homocysteine + H(+). Its function is as follows. Catalyzes the formation of 5-methyl-uridine at position 1939 (m5U1939) in 23S rRNA. This Burkholderia lata (strain ATCC 17760 / DSM 23089 / LMG 22485 / NCIMB 9086 / R18194 / 383) protein is 23S rRNA (uracil(1939)-C(5))-methyltransferase RlmD.